We begin with the raw amino-acid sequence, 481 residues long: Aspartyl/glutamyl-tRNA(Asn/Gln) amidotransferase subunit B (481 aa).

Belongs to the GatB/GatE family. GatB subfamily. Heterotrimer of A, B and C subunits.

It carries out the reaction L-glutamyl-tRNA(Gln) + L-glutamine + ATP + H2O = L-glutaminyl-tRNA(Gln) + L-glutamate + ADP + phosphate + H(+). It catalyses the reaction L-aspartyl-tRNA(Asn) + L-glutamine + ATP + H2O = L-asparaginyl-tRNA(Asn) + L-glutamate + ADP + phosphate + 2 H(+). Its function is as follows. Allows the formation of correctly charged Asn-tRNA(Asn) or Gln-tRNA(Gln) through the transamidation of misacylated Asp-tRNA(Asn) or Glu-tRNA(Gln) in organisms which lack either or both of asparaginyl-tRNA or glutaminyl-tRNA synthetases. The reaction takes place in the presence of glutamine and ATP through an activated phospho-Asp-tRNA(Asn) or phospho-Glu-tRNA(Gln). This is Aspartyl/glutamyl-tRNA(Asn/Gln) amidotransferase subunit B from Cellvibrio japonicus (strain Ueda107) (Pseudomonas fluorescens subsp. cellulosa).